The chain runs to 466 residues: MEGTMSSCFRGMLMKLRFSELLNNISSFEKKVNNLSDIFSYGCLISVNGLLLEVIGLTAPIGSRCYVERIIDGKILNISAEVVGFKKEKTLLFSLEETYGVFPGTRVFLKCFKNTYSITGKIPLSTELLGRVLDSKGRPLDGRSQLNPKFFTFLKSNVVNPLNRKPITEVLDTGIRAINALITVGRGQRIGIFSSSGLGKSILLGMMAKYTKADVVIIGLIGERGREVKDFIENILGSNGLSRSVVIAAPADVSPLLQIEAASYATSIAEYFRKKNKHVLLIMDSLTRYAMAQRAVSLSLGELPVSKGYPSSVFSKIPILVERTGNTDNYGSITSFYTVLTESEEDPQDPIAHICRSILDGHIVLSRHYAELGHYPAIDIENSISRVMPNIISKKQYSQACYFKKLIASYQRNRDLINIGAYLKGTDSTLDHAIKIWPILERFLQQKQSEKSSYLSSCEELNQIFI.

Residue 194–201 (SSSGLGKS) coordinates ATP.

Belongs to the ATPase alpha/beta chains family.

The protein resides in the cytoplasm. It catalyses the reaction ATP + H2O + 4 H(+)(in) = ADP + phosphate + 5 H(+)(out). Probable catalytic subunit of a protein translocase for flagellum-specific export, or a proton translocase involved in local circuits at the flagellum. May be involved in a specialized protein export pathway that proceeds without signal peptide cleavage. In Buchnera aphidicola subsp. Schizaphis graminum (strain Sg), this protein is Flagellum-specific ATP synthase (fliI).